Reading from the N-terminus, the 118-residue chain is Small ribosomal subunit protein uS13 (118 aa).

Residues 92–118 (RRGLPVRGQRTKTNARTRKGPRKPIKK) form a disordered region.

It belongs to the universal ribosomal protein uS13 family. In terms of assembly, part of the 30S ribosomal subunit. Forms a loose heterodimer with protein S19. Forms two bridges to the 50S subunit in the 70S ribosome.

In terms of biological role, located at the top of the head of the 30S subunit, it contacts several helices of the 16S rRNA. In the 70S ribosome it contacts the 23S rRNA (bridge B1a) and protein L5 of the 50S subunit (bridge B1b), connecting the 2 subunits; these bridges are implicated in subunit movement. Contacts the tRNAs in the A and P-sites. The protein is Small ribosomal subunit protein uS13 of Yersinia pestis.